A 359-amino-acid polypeptide reads, in one-letter code: Probable tyrosine-protein phosphatase pir-2 (359 aa).

Residues 16–191 (QPVGNVIPRT…AKDKRDKQVD (176 aa)) form the Tyrosine-protein phosphatase domain. Cysteine 131 acts as the Phosphocysteine intermediate in catalysis. Basic and acidic residues predominate over residues 184 to 199 (DKRDKQVDSDSDSSER). Disordered regions lie at residues 184-211 (DKRDKQVDSDSDSSERQRKKKNKRKHRE), 234-259 (SVSGTDYQNSPNGVSVDPGQPQPHHW), and 274-328 (PVAN…RNRM). A compositionally biased stretch (basic residues) spans 200–210 (QRKKKNKRKHR). The span at 234-246 (SVSGTDYQNSPNG) shows a compositional bias: polar residues. Positions 290 to 309 (PQEEEEFEEDFEEIEEETET) are enriched in acidic residues. Positions 319-328 (SKRRARRNRM) are enriched in basic residues.

This sequence belongs to the protein-tyrosine phosphatase family. Non-receptor class CDC14 subfamily.

It carries out the reaction O-phospho-L-tyrosyl-[protein] + H2O = L-tyrosyl-[protein] + phosphate. This chain is Probable tyrosine-protein phosphatase pir-2, found in Caenorhabditis elegans.